Here is a 495-residue protein sequence, read N- to C-terminus: Phage-like element PBSX protein XkdE (495 aa).

Belongs to the phage portal family. PBSX subfamily.

The protein is Phage-like element PBSX protein XkdE (xkdE) of Bacillus subtilis (strain 168).